The sequence spans 211 residues: uncharacterized protein (211 aa).

This is an uncharacterized protein from Methanocaldococcus jannaschii (strain ATCC 43067 / DSM 2661 / JAL-1 / JCM 10045 / NBRC 100440) (Methanococcus jannaschii).